The chain runs to 117 residues: MAAKKANKKPVRYRMHVKKGDTVQVIAGSDKAKVGEVLAVFPKTSQVIVKGVNLKTKHLKPRQEGESGQIITKEAPIHSCKVMLYSTKQNVASRICYTYTEDGRKVRMLKKTGEIID.

Belongs to the universal ribosomal protein uL24 family. As to quaternary structure, part of the 50S ribosomal subunit.

Functionally, one of two assembly initiator proteins, it binds directly to the 5'-end of the 23S rRNA, where it nucleates assembly of the 50S subunit. One of the proteins that surrounds the polypeptide exit tunnel on the outside of the subunit. In Thermosynechococcus vestitus (strain NIES-2133 / IAM M-273 / BP-1), this protein is Large ribosomal subunit protein uL24.